We begin with the raw amino-acid sequence, 1059 residues long: Transmembrane protease serine 9 (1059 aa).

The Cytoplasmic segment spans residues 1–29; sequence MEPTVADVHLVPRTTKEVPALDAACCRAA. Residues 30–50 form a helical; Signal-anchor for type II membrane protein membrane-spanning segment; that stretch reads SIGVVATSLVVLTLGVLLAFL. At 51 to 1059 the chain is on the extracellular side; sequence STQGFHVDHT…RGWIGQHIQE (1009 aa). An LDL-receptor class A domain is found at 153–190; the sequence is RCPGNSFSCGNSQCVTKVNPECDDQEDCSDGSDEAHCE. 4 cysteine pairs are disulfide-bonded: Cys-154/Cys-166, Cys-161/Cys-180, Cys-174/Cys-189, and Cys-228/Cys-244. A Peptidase S1 1 domain is found at 203 to 436; it reads IVGGMEASPG…LRDWILEATT (234 aa). Active-site charge relay system residues include His-243 and Asp-292. 3 cysteine pairs are disulfide-bonded: Cys-326/Cys-393, Cys-358/Cys-372, and Cys-383/Cys-412. The Charge relay system role is filled by Ser-387. Positions 443–469 are disordered; it reads APTMAPAPAAPSTAWPTSPESPVVSTP. The Peptidase S1 2 domain occupies 504–736; it reads VVGGFGAASG…LKGWILEIMS (233 aa). Cys-529 and Cys-545 are disulfide-bonded. The Charge relay system role is filled by His-544. Residue Asn-547 is glycosylated (N-linked (GlcNAc...) asparagine). The active-site Charge relay system is Asp-592. Disulfide bonds link Cys-626-Cys-693, Cys-658-Cys-672, and Cys-683-Cys-712. 2 N-linked (GlcNAc...) asparagine glycosylation sites follow: Asn-638 and Asn-663. Ser-687 functions as the Charge relay system in the catalytic mechanism. A disordered region spans residues 758 to 814; sequence TTAGLTVPGATPSRPTPGAASRVTGQPANSTLSAVSTTARGQTPFPDAPEATTHTQL. Polar residues predominate over residues 780–798; it reads VTGQPANSTLSAVSTTARG. Asn-786 carries N-linked (GlcNAc...) asparagine glycosylation. The 232-residue stretch at 827–1058 folds into the Peptidase S1 3 domain; the sequence is IVGGSAAGRG…VRGWIGQHIQ (232 aa). 4 disulfide bridges follow: Cys-853–Cys-869, Cys-949–Cys-1015, Cys-980–Cys-994, and Cys-1005–Cys-1034.

The protein belongs to the peptidase S1 family. In terms of processing, proteolytically cleaved to generate 3 independent serine protease chains. The cleaved chains may remain attached to the membrane thanks to disulfide bonds. It is unclear whether cleavage always takes place. In terms of tissue distribution, expressed in fetal human tissues, such as kidney, liver, lung and brain, and in a variety of tumor cell lines. Weakly expressed in adult tissues including skeletal muscle, liver, placenta and heart.

The protein resides in the cell membrane. Its activity is regulated as follows. Inhibited by serine protease inhibitors PMSF and 4-(2-aminoethyl)benzenesulfonyl fluoride, but not by EDTA. Serase-1 and serase-2 are serine proteases that hydrolyze the peptides N-t-Boc-Gln-Ala-Arg-AMC and N-t-Boc-Gln-Gly-Arg-AMC. In contrast, N-t-Boc-Ala-Phe-Lys-AMC and N-t-Boc-Ala-Pro-Ala-AMC are not significantly hydrolyzed. The sequence is that of Transmembrane protease serine 9 (TMPRSS9) from Homo sapiens (Human).